Consider the following 32-residue polypeptide: Delta-conotoxin-like CnVID (32 aa).

3 disulfides stabilise this stretch: Cys-3–Cys-18, Cys-10–Cys-22, and Cys-17–Cys-27. Pro-6 and Pro-14 each carry 4-hydroxyproline.

The protein belongs to the conotoxin O1 superfamily. Expressed by the venom duct.

The protein localises to the secreted. Delta-conotoxins bind to site 6 of voltage-gated sodium channels (Nav) and inhibit the inactivation process. This toxin acts on Nav1.2/SCN2A, Nav1.3/SCN3A and Nav1.6/SCN8A (EC(50)=1.7 uM). In Conus consors (Singed cone), this protein is Delta-conotoxin-like CnVID.